The chain runs to 394 residues: Elongation factor Tu (394 aa).

One can recognise a tr-type G domain in the interval 10–204 (KPHVNIGTIG…AVDEYIPTPD (195 aa)). The interval 19 to 26 (GHIDHGKT) is G1. Residue 19 to 26 (GHIDHGKT) coordinates GTP. T26 lines the Mg(2+) pocket. A G2 region spans residues 60-64 (GITIN). The tract at residues 81–84 (DCPG) is G3. GTP-binding positions include 81-85 (DCPGH) and 136-139 (NKCD). The interval 136–139 (NKCD) is G4. A G5 region spans residues 174 to 176 (SAL).

This sequence belongs to the TRAFAC class translation factor GTPase superfamily. Classic translation factor GTPase family. EF-Tu/EF-1A subfamily. In terms of assembly, monomer.

The protein localises to the cytoplasm. The enzyme catalyses GTP + H2O = GDP + phosphate + H(+). In terms of biological role, GTP hydrolase that promotes the GTP-dependent binding of aminoacyl-tRNA to the A-site of ribosomes during protein biosynthesis. This chain is Elongation factor Tu, found in Mycoplasmoides gallisepticum (strain R(low / passage 15 / clone 2)) (Mycoplasma gallisepticum).